Consider the following 308-residue polypeptide: UDP-N-acetylenolpyruvoylglucosamine reductase (308 aa).

In terms of domain architecture, FAD-binding PCMH-type spans 32–197; it reads QTGGKADYYL…LEAAFTLAPG (166 aa). Residue Arg-176 is part of the active site. The active-site Proton donor is Ser-226. Glu-296 is a catalytic residue.

Belongs to the MurB family. The cofactor is FAD.

The protein resides in the cytoplasm. The catalysed reaction is UDP-N-acetyl-alpha-D-muramate + NADP(+) = UDP-N-acetyl-3-O-(1-carboxyvinyl)-alpha-D-glucosamine + NADPH + H(+). Its pathway is cell wall biogenesis; peptidoglycan biosynthesis. Functionally, cell wall formation. The protein is UDP-N-acetylenolpyruvoylglucosamine reductase of Staphylococcus saprophyticus subsp. saprophyticus (strain ATCC 15305 / DSM 20229 / NCIMB 8711 / NCTC 7292 / S-41).